We begin with the raw amino-acid sequence, 519 residues long: Cytosol aminopeptidase (519 aa).

Lys-45 is modified (N6-succinyllysine). Ser-54 is modified (phosphoserine). Residues Lys-61 and Lys-103 each carry the N6-succinyllysine modification. Residues Ser-180 and Ser-194 each carry the phosphoserine modification. Zn(2+) is bound by residues Leu-202 and Met-203. Lys-221 carries the post-translational modification N6-acetyllysine; alternate. The residue at position 221 (Lys-221) is an N6-succinyllysine; alternate. Ser-238 is subject to Phosphoserine. Positions 282 and 287 each coordinate Zn(2+). Residues Lys-282, Asp-287, Ser-292, and Lys-294 each coordinate substrate. Asp-287 serves as a coordination point for Mg(2+). Residue Lys-294 is part of the active site. Residues Arg-303, Asp-305, Asp-364, and Glu-366 each coordinate Zn(2+). Substrate-binding residues include Asp-305 and Asp-364. Residues Asp-364 and Glu-366 each coordinate Mg(2+). Residue Arg-368 is part of the active site. Residue Lys-455 is modified to N6-acetyllysine; alternate. The residue at position 455 (Lys-455) is an N6-succinyllysine; alternate. At Lys-476 the chain carries N6-succinyllysine. Lys-489 bears the N6-acetyllysine; alternate mark. Lys-489 is modified (N6-succinyllysine; alternate).

Belongs to the peptidase M17 family. As to quaternary structure, homohexamer. Zn(2+) serves as cofactor. Mn(2+) is required as a cofactor.

It localises to the cytoplasm. The enzyme catalyses Release of an N-terminal amino acid, Xaa-|-Yaa-, in which Xaa is preferably Leu, but may be other amino acids including Pro although not Arg or Lys, and Yaa may be Pro. Amino acid amides and methyl esters are also readily hydrolyzed, but rates on arylamides are exceedingly low.. It catalyses the reaction an S-substituted L-cysteinylglycine + H2O = an S-substituted L-cysteine + glycine. It carries out the reaction L-cysteinylglycine + H2O = L-cysteine + glycine. The catalysed reaction is S-benzyl-L-cysteinylglycine + H2O = S-benzyl-L-cysteine + glycine. The enzyme catalyses Release of N-terminal proline from a peptide.. Cytosolic metallopeptidase that catalyzes the removal of unsubstituted N-terminal hydrophobic amino acids from various peptides. The presence of Zn(2+) ions is essential for the peptidase activity, and the association with other cofactors can modulate the substrate spectificity of the enzyme. For instance, in the presence of Mn(2+), it displays a specific Cys-Gly hydrolyzing activity of Cys-Gly-S-conjugates. Involved in the metabolism of glutathione and in the degradation of glutathione S-conjugates, which may play a role in the control of the cell redox status. This is Cytosol aminopeptidase from Mus musculus (Mouse).